The primary structure comprises 217 residues: Grancalcin (217 aa).

4 consecutive EF-hand domains span residues 48 to 83, 89 to 122, 119 to 154, and 155 to 180; these read SSAGDSVYTYFSAVAGQDGEVDAEELQRCLTQSGIN, FSLETCRIMIAMLDRDHTGKMGFNAFKELWAALN, AALNAWKENFMTVDQDGSGTVEHHELRQAIGLMGYR, and LSPQTLTTIVKRYSKNGRIFFDDYVA. Ca(2+) is bound by residues Asp65, Asp69, and Glu71. Residues Asp132, Asp134, Ser136, Thr138, and Glu143 each contribute to the Ca(2+) site.

Homodimer. Interacts with SRI and LCP1. As to expression, detected in neutrophils and macrophages (at protein level). Highly expressed in bone marrow.

Its subcellular location is the cytoplasm. It is found in the cytoplasmic granule membrane. Calcium-binding protein that may play a role in the adhesion of neutrophils to fibronectin. May play a role in the formation of focal adhesions. The protein is Grancalcin (GCA) of Homo sapiens (Human).